A 313-amino-acid polypeptide reads, in one-letter code: 2-dehydro-3-deoxygluconokinase/2-dehydro-3-deoxygalactonokinase (313 aa).

Substrate is bound by residues 34–38, Y90, 106–108, and R166; these read GSELN and YYR. Residues 164-166, 226-231, and 255-258 each bind ATP; these read NIR, KLGSKG, and GAGD. Positions 258 and 294 each coordinate substrate. The active-site Proton acceptor is the D258.

As to quaternary structure, homohexamer; trimer of dimers.

It carries out the reaction 2-dehydro-3-deoxy-D-gluconate + ATP = 2-dehydro-3-deoxy-6-phospho-D-gluconate + ADP + H(+). The enzyme catalyses 2-dehydro-3-deoxy-D-galactonate + ATP = 2-dehydro-3-deoxy-6-phospho-D-galactonate + ADP + H(+). It functions in the pathway carbohydrate acid metabolism; 2-dehydro-3-deoxy-D-gluconate degradation; D-glyceraldehyde 3-phosphate and pyruvate from 2-dehydro-3-deoxy-D-gluconate: step 1/2. Its function is as follows. Involved in the degradation of glucose and galactose via the semi-phosphorylative Entner-Doudoroff pathway. Catalyzes the phosphorylation of 2-keto-3-deoxygluconate (KDG) and 2-keto-3-deoxygalactonate (KDGal) to produce 2-keto-3-deoxy-6-phosphogluconate (KDPG) and 2-keto-3-deoxy-6-phosphogalactonate (KDPGal), respectively. The protein is 2-dehydro-3-deoxygluconokinase/2-dehydro-3-deoxygalactonokinase (kdgK) of Saccharolobus solfataricus (strain ATCC 35092 / DSM 1617 / JCM 11322 / P2) (Sulfolobus solfataricus).